The following is a 231-amino-acid chain: Biosynthetic peptidoglycan transglycosylase (231 aa).

The chain crosses the membrane as a helical span at residues 7 to 27 (LLFWLILVPILLVLLMQLYFF).

Belongs to the glycosyltransferase 51 family.

It is found in the cell inner membrane. It carries out the reaction [GlcNAc-(1-&gt;4)-Mur2Ac(oyl-L-Ala-gamma-D-Glu-L-Lys-D-Ala-D-Ala)](n)-di-trans,octa-cis-undecaprenyl diphosphate + beta-D-GlcNAc-(1-&gt;4)-Mur2Ac(oyl-L-Ala-gamma-D-Glu-L-Lys-D-Ala-D-Ala)-di-trans,octa-cis-undecaprenyl diphosphate = [GlcNAc-(1-&gt;4)-Mur2Ac(oyl-L-Ala-gamma-D-Glu-L-Lys-D-Ala-D-Ala)](n+1)-di-trans,octa-cis-undecaprenyl diphosphate + di-trans,octa-cis-undecaprenyl diphosphate + H(+). It participates in cell wall biogenesis; peptidoglycan biosynthesis. Peptidoglycan polymerase that catalyzes glycan chain elongation from lipid-linked precursors. The protein is Biosynthetic peptidoglycan transglycosylase of Herminiimonas arsenicoxydans.